Consider the following 197-residue polypeptide: MQKVVLATGNAGKVRELASLLSDFGLDIVAQTELGVDSAEETGLTFIENAILKARHAAKVTGLPAIADDSGLAVDVLGGAPGIYSARYSGEDATDQKNLQKLLETLKDVPDDQRQARFHCVLVYLRHAEDPTPLVCHGSWPGVITREPAGTGGFGYDPIFFVPSEGKTAAELTREEKSAISHRGQALKLLLDALRNG.

8 to 13 contacts substrate; it reads TGNAGK. Positions 40 and 69 each coordinate Mg(2+). Asp-69 functions as the Proton acceptor in the catalytic mechanism. Substrate-binding positions include Ser-70, 154–157, Lys-177, and 182–183; these read FGYD and HR.

The protein belongs to the HAM1 NTPase family. As to quaternary structure, homodimer. Mg(2+) is required as a cofactor.

The enzyme catalyses XTP + H2O = XMP + diphosphate + H(+). It catalyses the reaction dITP + H2O = dIMP + diphosphate + H(+). The catalysed reaction is ITP + H2O = IMP + diphosphate + H(+). In terms of biological role, pyrophosphatase that catalyzes the hydrolysis of nucleoside triphosphates to their monophosphate derivatives, with a high preference for the non-canonical purine nucleotides XTP (xanthosine triphosphate), dITP (deoxyinosine triphosphate) and ITP. Seems to function as a house-cleaning enzyme that removes non-canonical purine nucleotides from the nucleotide pool, thus preventing their incorporation into DNA/RNA and avoiding chromosomal lesions. In Escherichia coli O157:H7, this protein is dITP/XTP pyrophosphatase (rdgB).